Reading from the N-terminus, the 142-residue chain is Large ribosomal subunit protein uL11 (142 aa).

This sequence belongs to the universal ribosomal protein uL11 family. In terms of assembly, part of the ribosomal stalk of the 50S ribosomal subunit. Interacts with L10 and the large rRNA to form the base of the stalk. L10 forms an elongated spine to which L12 dimers bind in a sequential fashion forming a multimeric L10(L12)X complex. One or more lysine residues are methylated.

Functionally, forms part of the ribosomal stalk which helps the ribosome interact with GTP-bound translation factors. This Xanthomonas axonopodis pv. citri (strain 306) protein is Large ribosomal subunit protein uL11.